The primary structure comprises 513 residues: Lysine--tRNA ligase (513 aa).

Mg(2+) contacts are provided by Glu423 and Glu430.

Belongs to the class-II aminoacyl-tRNA synthetase family. Homodimer. It depends on Mg(2+) as a cofactor.

Its subcellular location is the cytoplasm. The enzyme catalyses tRNA(Lys) + L-lysine + ATP = L-lysyl-tRNA(Lys) + AMP + diphosphate. The polypeptide is Lysine--tRNA ligase (Anaeromyxobacter dehalogenans (strain 2CP-1 / ATCC BAA-258)).